A 99-amino-acid polypeptide reads, in one-letter code: Small ribosomal subunit protein uS14 (99 aa).

It belongs to the universal ribosomal protein uS14 family. In terms of assembly, part of the 30S ribosomal subunit. Contacts proteins S3 and S10.

Functionally, binds 16S rRNA, required for the assembly of 30S particles and may also be responsible for determining the conformation of the 16S rRNA at the A site. The sequence is that of Small ribosomal subunit protein uS14 from Bacteroides fragilis (strain ATCC 25285 / DSM 2151 / CCUG 4856 / JCM 11019 / LMG 10263 / NCTC 9343 / Onslow / VPI 2553 / EN-2).